The sequence spans 747 residues: Histone-lysine N-methyltransferase EZH1 (747 aa).

Residues 188–231 (DEEEDGHNDPSDGKQDDSKEDLPVTRKRKRHAIEGNKKSSKKQF) form a disordered region. Over residues 194–211 (HNDPSDGKQDDSKEDLPV) the composition is skewed to basic and acidic residues. A Glycyl lysine isopeptide (Lys-Gly) (interchain with G-Cter in SUMO2) cross-link involves residue K327. The disordered stretch occupies residues 368–414 (VSASCSNASASAMAETKEGDSDRDTGNDWASSSSEANSRCQTPTKQK). Over residues 369 to 381 (SASCSNASASAMA) the composition is skewed to low complexity. A compositionally biased stretch (basic and acidic residues) spans 382–393 (ETKEGDSDRDTG). A compositionally biased stretch (polar residues) spans 395–414 (DWASSSSEANSRCQTPTKQK). A Nuclear localization signal motif is present at residues 491-496 (QKKKRK). The CXC domain occupies 504 to 606 (CRKIQLKKDN…CKVVSCKNCS (103 aa)). Positions 613-728 (KHLLLAPSDV…AGEELFFDYR (116 aa)) constitute an SET domain.

The protein belongs to the class V-like SAM-binding methyltransferase superfamily. Histone-lysine methyltransferase family. EZ subfamily. In terms of assembly, component of the PRC2/EED-EZH1 complex, which includes EED, EZH1, SUZ12, RBBP4 and AEBP2. The PRC2/EED-EZH1 is less abundant than the PRC2/EED-EZH2 complex, has weak methyltransferase activity and compacts chromatin in the absence of the methyltransferase cofactor S-adenosyl-L-methionine (SAM). Interacts with EZHIP; the interaction blocks EZH1 methyltransferase activity. Expressed at high levels in kidney, adrenal gland, testis and brain.

The protein resides in the nucleus. It carries out the reaction L-lysyl(27)-[histone H3] + 3 S-adenosyl-L-methionine = N(6),N(6),N(6)-trimethyl-L-lysyl(27)-[histone H3] + 3 S-adenosyl-L-homocysteine + 3 H(+). Functionally, polycomb group (PcG) protein. Catalytic subunit of the PRC2/EED-EZH1 complex, which methylates 'Lys-27' of histone H3, leading to transcriptional repression of the affected target gene. Able to mono-, di- and trimethylate 'Lys-27' of histone H3 to form H3K27me1, H3K27me2 and H3K27me3, respectively. Required for embryonic stem cell derivation and self-renewal, suggesting that it is involved in safeguarding embryonic stem cell identity. Compared to EZH2-containing complexes, it is less abundant in embryonic stem cells, has weak methyltransferase activity and plays a less critical role in forming H3K27me3, which is required for embryonic stem cell identity and proper differentiation. This Mus musculus (Mouse) protein is Histone-lysine N-methyltransferase EZH1 (Ezh1).